We begin with the raw amino-acid sequence, 177 residues long: Large ribosomal subunit protein uL6 (177 aa).

This sequence belongs to the universal ribosomal protein uL6 family. In terms of assembly, part of the 50S ribosomal subunit.

Its function is as follows. This protein binds to the 23S rRNA, and is important in its secondary structure. It is located near the subunit interface in the base of the L7/L12 stalk, and near the tRNA binding site of the peptidyltransferase center. The polypeptide is Large ribosomal subunit protein uL6 (Stutzerimonas stutzeri (strain A1501) (Pseudomonas stutzeri)).